A 238-amino-acid polypeptide reads, in one-letter code: Testis-specific gene A8 protein (238 aa).

Residues glycine 35 to threonine 238 are disordered. A compositionally biased stretch (basic residues) spans lysine 39–glycine 48. Tandem repeats lie at residues alanine 79 to serine 93, alanine 94 to serine 108, alanine 109 to serine 123, alanine 124 to serine 138, proline 153 to alanine 158, proline 171 to alanine 176, proline 180 to alanine 185, and proline 189 to alanine 194. The tract at residues alanine 79 to alanine 148 is 4 X 15 AA tandem repeats of A-A-A-A-A-P-E-A-A-A-S-[PL]-E-S-S. 2 stretches are compositionally biased toward low complexity: residues alanine 79–alanine 200 and tryptophan 208–lysine 220. Residues proline 153–alanine 194 are 4 X 6 AA repeats of P-A-A-P-E-A.

In terms of tissue distribution, specifically expressed in testis (at protein level).

Its subcellular location is the cytoplasm. It is found in the nucleus. The protein resides in the nucleoplasm. This chain is Testis-specific gene A8 protein, found in Mus musculus (Mouse).